The following is a 74-amino-acid chain: Putative membrane protein insertion efficiency factor (74 aa).

Belongs to the UPF0161 family.

Its subcellular location is the cell inner membrane. In terms of biological role, could be involved in insertion of integral membrane proteins into the membrane. The chain is Putative membrane protein insertion efficiency factor from Anaeromyxobacter sp. (strain Fw109-5).